An 89-amino-acid chain; its full sequence is uncharacterized protein (89 aa).

Helical transmembrane passes span 1-21 and 28-48; these read MFLA…ISLI and GISL…TIAA.

The protein localises to the cell membrane. This is an uncharacterized protein from Methanocaldococcus jannaschii (strain ATCC 43067 / DSM 2661 / JAL-1 / JCM 10045 / NBRC 100440) (Methanococcus jannaschii).